A 290-amino-acid chain; its full sequence is 4-hydroxy-tetrahydrodipicolinate synthase (290 aa).

Thr-44 serves as a coordination point for pyruvate. Residue Tyr-132 is the Proton donor/acceptor of the active site. Catalysis depends on Lys-160, which acts as the Schiff-base intermediate with substrate. Ile-202 serves as a coordination point for pyruvate.

This sequence belongs to the DapA family. As to quaternary structure, homotetramer; dimer of dimers.

The protein localises to the cytoplasm. The enzyme catalyses L-aspartate 4-semialdehyde + pyruvate = (2S,4S)-4-hydroxy-2,3,4,5-tetrahydrodipicolinate + H2O + H(+). It functions in the pathway amino-acid biosynthesis; L-lysine biosynthesis via DAP pathway; (S)-tetrahydrodipicolinate from L-aspartate: step 3/4. Its function is as follows. Catalyzes the condensation of (S)-aspartate-beta-semialdehyde [(S)-ASA] and pyruvate to 4-hydroxy-tetrahydrodipicolinate (HTPA). In Geobacter sp. (strain M21), this protein is 4-hydroxy-tetrahydrodipicolinate synthase.